We begin with the raw amino-acid sequence, 116 residues long: MNFTLLVVVLLTAIAFVGVVIALSNAISPRSYNAQKFEAYECGIPTRGKSWMQFRVGYYLFAILFLMFDVETVFLFPWAVIARDLGPQGLISILFFLVVLVLGLAYAWKKGALEWK.

3 helical membrane-spanning segments follow: residues 3–23, 61–81, and 88–108; these read FTLL…VIAL, FAIL…WAVI, and QGLI…AYAW.

It belongs to the complex I subunit 3 family. In terms of assembly, NDH-1 is composed of 14 different subunits. Subunits NuoA, H, J, K, L, M, N constitute the membrane sector of the complex.

It localises to the cell inner membrane. It catalyses the reaction a quinone + NADH + 5 H(+)(in) = a quinol + NAD(+) + 4 H(+)(out). Functionally, NDH-1 shuttles electrons from NADH, via FMN and iron-sulfur (Fe-S) centers, to quinones in the respiratory chain. The immediate electron acceptor for the enzyme in this species is believed to be a menaquinone. Couples the redox reaction to proton translocation (for every two electrons transferred, four hydrogen ions are translocated across the cytoplasmic membrane), and thus conserves the redox energy in a proton gradient. This Bacteroides fragilis (strain ATCC 25285 / DSM 2151 / CCUG 4856 / JCM 11019 / LMG 10263 / NCTC 9343 / Onslow / VPI 2553 / EN-2) protein is NADH-quinone oxidoreductase subunit A.